Reading from the N-terminus, the 190-residue chain is Peptidyl-tRNA hydrolase (190 aa).

Residue tyrosine 14 coordinates tRNA. Histidine 19 serves as the catalytic Proton acceptor. Residues tyrosine 64, asparagine 66, and asparagine 112 each coordinate tRNA.

The protein belongs to the PTH family. As to quaternary structure, monomer.

The protein resides in the cytoplasm. The catalysed reaction is an N-acyl-L-alpha-aminoacyl-tRNA + H2O = an N-acyl-L-amino acid + a tRNA + H(+). In terms of biological role, hydrolyzes ribosome-free peptidyl-tRNAs (with 1 or more amino acids incorporated), which drop off the ribosome during protein synthesis, or as a result of ribosome stalling. Its function is as follows. Catalyzes the release of premature peptidyl moieties from peptidyl-tRNA molecules trapped in stalled 50S ribosomal subunits, and thus maintains levels of free tRNAs and 50S ribosomes. This is Peptidyl-tRNA hydrolase from Chlorobium limicola (strain DSM 245 / NBRC 103803 / 6330).